We begin with the raw amino-acid sequence, 200 residues long: ADP-ribosylation factor-like protein 4A (200 aa).

Gly-2 carries the N-myristoyl glycine lipid modification. Residues 27–34 (GLDCAGKT), 75–79 (DVGGQ), and 134–137 (NKQD) contribute to the GTP site.

Belongs to the small GTPase superfamily. Arf family. In terms of assembly, interacts with CYTH2. Interacts with KPNA2; the interaction is direct. Does not interact with ARL4A. In terms of processing, myristoylated. Expressed strongly in testis and liver. Expressed slightly in heart, spleen, lung and kidney.

It is found in the cell membrane. It localises to the cytoplasm. The protein localises to the nucleus. The protein resides in the nucleolus. Small GTP-binding protein which cycles between an inactive GDP-bound and an active GTP-bound form, and the rate of cycling is regulated by guanine nucleotide exchange factors (GEF) and GTPase-activating proteins (GAP). GTP-binding protein that does not act as an allosteric activator of the cholera toxin catalytic subunit. Recruits CYTH1, CYTH2, CYTH3 and CYTH4 to the plasma membrane in GDP-bound form. In Mus musculus (Mouse), this protein is ADP-ribosylation factor-like protein 4A (Arl4a).